The chain runs to 284 residues: Tropomyosin (284 aa).

Residues 1 to 284 (MDAIKKKMLM…DQALNELHNM (284 aa)) are a coiled coil. Disordered regions lie at residues 106 to 134 (LNST…ENRQ) and 186 to 221 (AETK…EEAY). 2 stretches are compositionally biased toward basic and acidic residues: residues 112–134 (KLTD…ENRQ) and 186–198 (AETK…DELK).

It belongs to the tropomyosin family. In terms of assembly, homodimer.

Its function is as follows. Tropomyosin, in association with the troponin complex, plays a central role in the calcium dependent regulation of muscle contraction. This is Tropomyosin (TPM) from Branchiostoma belcheri (Amphioxus).